The primary structure comprises 352 residues: DNA polymerase IV (352 aa).

In terms of domain architecture, UmuC spans 6 to 187; the sequence is IIHIDADCFY…VPVKFISGIG (182 aa). Residues Asp-10 and Asp-105 each coordinate Mg(2+). Glu-106 is an active-site residue.

It belongs to the DNA polymerase type-Y family. As to quaternary structure, monomer. The cofactor is Mg(2+).

It localises to the cytoplasm. The catalysed reaction is DNA(n) + a 2'-deoxyribonucleoside 5'-triphosphate = DNA(n+1) + diphosphate. Functionally, poorly processive, error-prone DNA polymerase involved in untargeted mutagenesis. Copies undamaged DNA at stalled replication forks, which arise in vivo from mismatched or misaligned primer ends. These misaligned primers can be extended by PolIV. Exhibits no 3'-5' exonuclease (proofreading) activity. May be involved in translesional synthesis, in conjunction with the beta clamp from PolIII. The protein is DNA polymerase IV of Marinomonas sp. (strain MWYL1).